The sequence spans 657 residues: THO complex subunit 1 (657 aa).

M1 bears the N-acetylmethionine mark. S2 bears the Phosphoserine mark. T4 carries the post-translational modification Phosphothreonine. Residue K31 forms a Glycyl lysine isopeptide (Lys-Gly) (interchain with G-Cter in SUMO2) linkage. N6-acetyllysine is present on K133. Residues 133–167 (KNYLLRMCNDLLRRLSKSQNTVFCGRIQLFLARLF) are dock domain; interaction with THOC2. The disordered stretch occupies residues 194–222 (QESTLGQKHTEDREEGMDVEEGEMGDEEA). Positions 206–222 (REEGMDVEEGEMGDEEA) are enriched in acidic residues. Residues 227 to 397 (SIPIDYNLYR…WNSWKNEGCP (171 aa)) form a dock domain; interaction with THOC2 region. K300 bears the N6-acetyllysine mark. A Glycyl lysine isopeptide (Lys-Gly) (interchain with G-Cter in SUMO2) cross-link involves residue K408. Positions 414-430 (RKRTAPEDFLGKGPTKK) match the Nuclear localization signal motif. Residues 533-569 (LPPPSEEIKTGEDEDEEDNDALLKENESPDVRRDKPV) form a disordered region. The residue at position 537 (S537) is a Phosphoserine. The residue at position 542 (T542) is a Phosphothreonine. The segment covering 553–569 (ALLKENESPDVRRDKPV) has biased composition (basic and acidic residues). The residue at position 560 (S560) is a Phosphoserine. Residues 570–653 (TGEQIEVFAN…DLAESLTNDN (84 aa)) enclose the Death domain. A Glycyl lysine isopeptide (Lys-Gly) (interchain with G-Cter in SUMO2) cross-link involves residue K580. A Glycyl lysine isopeptide (Lys-Gly) (interchain with G-Cter in SUMO1); alternate cross-link involves residue K595. A Glycyl lysine isopeptide (Lys-Gly) (interchain with G-Cter in SUMO2); alternate cross-link involves residue K595.

This sequence belongs to the THOC1 family. As to quaternary structure, component of the THO subcomplex, which is composed of THOC1, THOC2, THOC3, THOC5, THOC6 and THOC7. The THO subcomplex interacts with DDX39B to form the THO-DDX39B complex which multimerizes into a 28-subunit tetrameric assembly. Component of the transcription/export (TREX) complex at least composed of ALYREF/THOC4, DDX39B, SARNP/CIP29, CHTOP and the THO subcomplex; in the complex interacts with THOC2, THOC5 and THOC7. TREX seems to have a dynamic structure involving ATP-dependent remodeling. Binds to the hypophosphorylated form of RB1. Interacts with RNA polymerase II. Interacts with LUZP4. In terms of processing, expression is altered specifically during apoptosis and is accompanied by the appearance of novel forms with smaller apparent molecular mass. Post-translationally, polyubiquitinated, leading to proteasomal degradation; probably involves NEDD4. As to expression, ubiquitous. Expressed in various cancer cell lines. Expressed at very low levels in normal breast epithelial cells and highly expressed in breast tumors. Expression is strongly associated with an aggressive phenotype of breast tumors and expression correlates with tumor size and the metastatic state of the tumor progression.

It localises to the nucleus speckle. It is found in the nucleus. The protein resides in the nucleoplasm. The protein localises to the nucleus matrix. Its subcellular location is the cytoplasm. Component of the THO subcomplex of the TREX complex which is thought to couple mRNA transcription, processing and nuclear export, and which specifically associates with spliced mRNA and not with unspliced pre-mRNA. Required for efficient export of polyadenylated RNA. The THOC1-THOC2-THOC3 core complex alone is sufficient to bind export factor NXF1-NXT1 and promote ATPase activity of DDX39B/UAP56. TREX is recruited to spliced mRNAs by a transcription-independent mechanism, binds to mRNA upstream of the exon-junction complex (EJC) and is recruited in a splicing- and cap-dependent manner to a region near the 5' end of the mRNA where it functions in mRNA export to the cytoplasm via the TAP/NXF1 pathway. Regulates transcriptional elongation of a subset of genes. Involved in genome stability by preventing co-transcriptional R-loop formation. May play a role in hair cell formation, hence may be involved in hearing. In terms of biological role, participates in an apoptotic pathway which is characterized by activation of caspase-6, increases in the expression of BAK1 and BCL2L1 and activation of NF-kappa-B. This pathway does not require p53/TP53, nor does the presence of p53/TP53 affect the efficiency of cell killing. Activates a G2/M cell cycle checkpoint prior to the onset of apoptosis. Apoptosis is inhibited by association with RB1. Functionally, (Microbial infection) The TREX complex is essential for the export of Kaposi's sarcoma-associated herpesvirus (KSHV) intronless mRNAs and infectious virus production. The protein is THO complex subunit 1 (THOC1) of Homo sapiens (Human).